The following is a 117-amino-acid chain: Small ribosomal subunit protein uS8c (117 aa).

It belongs to the universal ribosomal protein uS8 family. As to quaternary structure, part of the 30S ribosomal subunit.

It localises to the plastid. The protein resides in the chloroplast. Functionally, one of the primary rRNA binding proteins, it binds directly to 16S rRNA central domain where it helps coordinate assembly of the platform of the 30S subunit. This is Small ribosomal subunit protein uS8c (rps8) from Cyanidioschyzon merolae (strain NIES-3377 / 10D) (Unicellular red alga).